The chain runs to 1049 residues: Protein phosphatase 1 regulatory subunit 12A (1049 aa).

6 ANK repeats span residues 39–68 (DDGAVFLAACSSGDTEEVLRMLDRGADINY), 72–101 (DGLTALHQACIDDNVDMVTFLVEHGACINQ), 105–134 (EGWIPLHAAASCGYLDIAEYLISQGASVGV), 138–164 (EGETPLDIAEEEAMEELLQNEINRQGV), 198–227 (SGGTALHVAAAKGYAEVLKLLIQAGYDVNI), and 231–260 (DGWTPLHAAAHWGKEEACRILVEHLCDMDV). Residues 302–947 (LIETTTTGDN…RPYSRFEKDD (646 aa)) form a disordered region. Residues 303–315 (IETTTTGDNNQSV) are compositionally biased toward polar residues. A compositionally biased stretch (basic and acidic residues) spans 319–341 (KSKETLLLEPEKTAPRIETLEPE). A compositionally biased stretch (acidic residues) spans 359–371 (SEEEEEEDSESEN). Residues 378-421 (SSVPSSVSNSTPTTAPSSITVTSPTTPSNQVTTPTSPTKKVSTP) are compositionally biased toward low complexity. The segment covering 426–436 (SPKEEDRKDES) has biased composition (basic and acidic residues). The span at 473 to 484 (RSASSPRLSSSL) shows a compositional bias: low complexity. The segment covering 485–497 (DNKDKEKEKEKTR) has biased composition (basic and acidic residues). Positions 545 to 564 (SDGTASTNRTSSYQRSTSHT) are enriched in polar residues. A compositionally biased stretch (low complexity) spans 571–592 (SSSRDLPAKSSSASSLEPNNSK). Over residues 593–607 (AWQPSSYYQSYSIHR) the composition is skewed to polar residues. A compositionally biased stretch (low complexity) spans 620–639 (SSTSSSTTTTTTTSSVTSPT). Residues 649 to 664 (WAEESAEKEKEKEKES) show a composition bias toward basic and acidic residues. A compositionally biased stretch (low complexity) spans 665–686 (ATVIPTINTAGTTTTTSTTGTV). A compositionally biased stretch (basic and acidic residues) spans 702–711 (VRDEESESQR). The span at 712 to 722 (KARSRQARQSR) shows a compositional bias: basic residues. The span at 747 to 789 (RPREDEKEEKEKQDKEKQEEKKETETKEDDYRSRYRSFEEKYR) shows a compositional bias: basic and acidic residues. Low complexity predominate over residues 790–819 (TSLASSTTASSTIPSSSSSSSSSLYSTSSL). The segment covering 820-829 (NRPNSLTGLT) has biased composition (polar residues). The segment covering 835 to 863 (STRDTDRESDRKEKDEDRDGDDKSQPRSI) has biased composition (basic and acidic residues). Residues 864–875 (RDRRRPREKRRS) show a composition bias toward basic residues. Basic and acidic residues-rich tracts occupy residues 890–906 (PDHPSDSEGSTKGEPQS) and 934–947 (GESRRPYSRFEKDD).

As to quaternary structure, PP1 comprises a catalytic subunit, and one or several targeting or regulatory subunits. Ppp1r12a mediates binding to myosin.

It localises to the cytoplasm. Its function is as follows. Regulates myosin phosphatase activity. This chain is Protein phosphatase 1 regulatory subunit 12A (ppp1r12a), found in Danio rerio (Zebrafish).